The primary structure comprises 619 residues: Tyrosine-protein kinase ZAP-70 (619 aa).

The 93-residue stretch at 10–102 folds into the SH2 1 domain; sequence FFYGSISRAE…GLPCNLRKPC (93 aa). The segment at 103-162 is interdomain A; it reads NRPSGLEPQPGVFDCLRDAMVRDYVRQTWKLEGEALEQAIISQAPQVEKLIATTAHERMP. The 92-residue stretch at 163–254 folds into the SH2 2 domain; sequence WYHSSLTREE…GLIYCLKEAC (92 aa). The residue at position 248 (Y248) is a Phosphotyrosine. Positions 255–337 are interdomain B; the sequence is PNSSASNASG…KKLFLKRDNL (83 aa). The tract at residues 260–309 is disordered; the sequence is SNASGAAAPTLPAHPSTLTHPQRRIDTLNSDGYTPEPARITSPDKPRPMP. Position 289 is a phosphoserine (S289). Y292 carries the post-translational modification Phosphotyrosine. The residue at position 315 (Y315) is a Phosphotyrosine; by LCK. Y319 carries the post-translational modification Phosphotyrosine. One can recognise a Protein kinase domain in the interval 338–600; it reads LIADIELGCG…QRMRACYYSL (263 aa). Residues 345 to 352 and K369 each bind ATP; that span reads GCGNFGSV. The Proton acceptor role is filled by D461. Phosphotyrosine is present on residues Y492 and Y493. K544 participates in a covalent cross-link: Glycyl lysine isopeptide (Lys-Gly) (interchain with G-Cter in ubiquitin). At K603 the chain carries N6-acetyllysine.

It belongs to the protein kinase superfamily. Tyr protein kinase family. SYK/ZAP-70 subfamily. Interacts with CD247/CD3Z; this interaction docks ZAP70 at the stimulated TCR. Interacts with NFAM1. Interacts with adapter protein SLA; this interaction negatively regulates T-cell receptor signaling. Interacts with FCRL3. Interacts with VAV1. Interacts with CBL; this interaction promotes ubiquitination, internalization and subsequent degradation of CD247/CD3Z. Identified in a complex with CBL and UBE2L3. Interacts with SHB. Interacts with adapter protein SLA2; this interaction negatively regulates T-cell receptor signaling. Interacts with CBLB. Interacts (via SH2 domains) with RHOH; this interaction regulates ZAP70 subcellular localization. Interacts with DEF6. Interacts (ubiquitinated form) with OTUD7B and UBASH3B. In terms of processing, phosphorylated on tyrosine residues upon T-cell antigen receptor (TCR) stimulation. Phosphorylation of Tyr-315 and Tyr-319 are essential for ZAP70 positive function on T-lymphocyte activation whereas Tyr-292 has a negative regulatory role. Within the C-terminal kinase domain, Tyr-492 and Tyr-493 are phosphorylated after TCR induction, Tyr-492 playing a negative regulatory role and Tyr-493 a positive. Tyr-493 is dephosphorylated by PTN22. Ubiquitinated in response to T cell activation. Deubiquitinated by OTUD7B. In terms of tissue distribution, expressed in T- and natural killer cells. Also present in early thymocytes and pro/pre B-cells.

The protein localises to the cytoplasm. The protein resides in the cell membrane. The catalysed reaction is L-tyrosyl-[protein] + ATP = O-phospho-L-tyrosyl-[protein] + ADP + H(+). Activated by phosphorylation at Tyr-493 in the activation loop. Inhibited by staurosporine. In terms of biological role, tyrosine kinase that plays an essential role in regulation of the adaptive immune response. Regulates motility, adhesion and cytokine expression of mature T-cells, as well as thymocyte development. Also contributes to the development and activation of primary B-lymphocytes. When antigen presenting cells (APC) activate T-cell receptor (TCR), a serie of phosphorylations lead to the recruitment of ZAP70 to the doubly phosphorylated TCR component CD247/CD3Z through ITAM motif at the plasma membrane. This recruitment serves to localization to the stimulated TCR and to relieve its autoinhibited conformation. Release of ZAP70 active conformation is further stabilized by phosphorylation mediated by LCK. Subsequently, ZAP70 phosphorylates at least 2 essential adapter proteins: LAT and LCP2. In turn, a large number of signaling molecules are recruited and ultimately lead to lymphokine production, T-cell proliferation and differentiation. Furthermore, ZAP70 controls cytoskeleton modifications, adhesion and mobility of T-lymphocytes, thus ensuring correct delivery of effectors to the APC. ZAP70 is also required for TCR-CD247/CD3Z internalization and degradation through interaction with the E3 ubiquitin-protein ligase CBL and adapter proteins SLA and SLA2. Thus, ZAP70 regulates both T-cell activation switch on and switch off by modulating TCR expression at the T-cell surface. During thymocyte development, ZAP70 promotes survival and cell-cycle progression of developing thymocytes before positive selection (when cells are still CD4/CD8 double negative). Additionally, ZAP70-dependent signaling pathway may also contribute to primary B-cells formation and activation through B-cell receptor (BCR). The sequence is that of Tyrosine-protein kinase ZAP-70 (ZAP70) from Homo sapiens (Human).